A 660-amino-acid polypeptide reads, in one-letter code: MKLYCVGHSVSSPCLVLQFKQTNIMLDCGLDMSTVNQFTPLSLVNNEKFSQLKSWSSRELQEIEGFTAQNNLKEAGGRLFIDAEPEVCPPETGLIDFSMVDVILISNYHHMLALPFITEYSGFNGKIYATEPTIQIGRDLMLELVTFAERVPKRRNGNMWKNDNVIRCLPAPLNELANVKSWRVLYSKHDVKACISKIQAVSYSEKLDLCGILQLSAHSSGFCLGSSNWMLESEYEKISYLSPSSSFTTHPLPLNQTVLKNSDVLIITGVTEAPIDNPDAMLGEFCTHLASTLRAGGNVLVPCYPSGVLYDLFECLYTYLDNAKLGMVPIYFISPVADSSLAYSNIYGEWLCQSKQTKVYLPEPPFPHAELLKEARLKVFSNLHNGFSSSFKTPCVVFTGHPSLRYGDAVHFMEIWGKSGNNTVIFTEPDFPYLEALAPYQPLAMKTCYCPIDPRLNFAQANKLLKELQPRHLVMPESYSRPPVIHPHRTDLTIEDPGCSLTTFNHLDVAALPISRSFEKVVIANELSSCLHPQHVRPGVAVATLTGTLVTKDNKYTLQPLEFLVEPKAGSEGGDSSTNKGQLSRHLWGTVQLDDFVRSLKKRGITDVNVESSGGEHTIHLPNDDAMILLDRGSTHIITHGNEELRIRIRDALLECVPQF.

This sequence belongs to the metallo-beta-lactamase superfamily. RNA-metabolizing metallo-beta-lactamase-like family. INTS9 subfamily. As to quaternary structure, component of the Integrator complex. The core complex associates with protein phosphatase 2A subunits, to form the Integrator-PP2A (INTAC) complex.

The protein resides in the nucleus. Its subcellular location is the cytoplasm. Functionally, component of the integrator complex, a multiprotein complex that terminates RNA polymerase II (Pol II) transcription in the promoter-proximal region of genes. The integrator complex provides a quality checkpoint during transcription elongation by driving premature transcription termination of transcripts that are unfavorably configured for transcriptional elongation: the complex terminates transcription by (1) catalyzing dephosphorylation of the C-terminal domain (CTD) of Pol II subunit polr2a, (2) degrading the exiting nascent RNA transcript via endonuclease activity and (3) promoting the release of Pol II from bound DNA. The integrator complex is also involved in terminating the synthesis of non-coding Pol II transcripts, such as enhancer RNAs (eRNAs), small nuclear RNAs (snRNAs), telomerase RNAs and long non-coding RNAs (lncRNAs). This chain is Integrator complex subunit 9 homolog (ints9), found in Nematostella vectensis (Starlet sea anemone).